Reading from the N-terminus, the 124-residue chain is Small ribosomal subunit protein uS12 (124 aa).

The residue at position 89 (Asp89) is a 3-methylthioaspartic acid. The interval Asp103–Ser124 is disordered. The segment covering Gln108–Ser124 has biased composition (basic residues).

It belongs to the universal ribosomal protein uS12 family. In terms of assembly, part of the 30S ribosomal subunit. Contacts proteins S8 and S17. May interact with IF1 in the 30S initiation complex.

Its function is as follows. With S4 and S5 plays an important role in translational accuracy. Functionally, interacts with and stabilizes bases of the 16S rRNA that are involved in tRNA selection in the A site and with the mRNA backbone. Located at the interface of the 30S and 50S subunits, it traverses the body of the 30S subunit contacting proteins on the other side and probably holding the rRNA structure together. The combined cluster of proteins S8, S12 and S17 appears to hold together the shoulder and platform of the 30S subunit. In Methylococcus capsulatus (strain ATCC 33009 / NCIMB 11132 / Bath), this protein is Small ribosomal subunit protein uS12.